The sequence spans 216 residues: Large ribosomal subunit protein uL3 (216 aa).

Positions 119–143 (GYQGNIHKDGQSRGPMAHGSRYHRR) are disordered.

The protein belongs to the universal ribosomal protein uL3 family. In terms of assembly, part of the 50S ribosomal subunit. Forms a cluster with proteins L14 and L19.

One of the primary rRNA binding proteins, it binds directly near the 3'-end of the 23S rRNA, where it nucleates assembly of the 50S subunit. This Levilactobacillus brevis (strain ATCC 367 / BCRC 12310 / CIP 105137 / JCM 1170 / LMG 11437 / NCIMB 947 / NCTC 947) (Lactobacillus brevis) protein is Large ribosomal subunit protein uL3.